The chain runs to 132 residues: Myelin P2 protein (132 aa).

The residue at position 2 (Ser2) is an N-acetylserine. (9Z)-octadecenoate is bound by residues Arg107 and 127-129 (RIY). Hexadecanoate contacts are provided by residues Arg107 and 127–129 (RIY).

Belongs to the calycin superfamily. Fatty-acid binding protein (FABP) family. As to quaternary structure, monomer.

The protein resides in the cytoplasm. In terms of biological role, may play a role in lipid transport protein in Schwann cells. May bind cholesterol. The sequence is that of Myelin P2 protein (PMP2) from Oryctolagus cuniculus (Rabbit).